Here is a 120-residue protein sequence, read N- to C-terminus: Large ribosomal subunit protein eL34 (120 aa).

The protein belongs to the eukaryotic ribosomal protein eL34 family.

In Nicotiana tabacum (Common tobacco), this protein is Large ribosomal subunit protein eL34 (RPL34).